The sequence spans 572 residues: Pentatricopeptide repeat-containing protein At1g26900, mitochondrial (572 aa).

Residues 1–117 (MTLAITSRLR…RAFSVFNQLR (117 aa)) constitute a mitochondrion transit peptide. 12 PPR repeats span residues 89-123 (NLFMFNTMIRGYSISDEPERAFSVFNQLRAKGLTL), 124-158 (DRFSFITTLKSCSRELCVSIGEGLHGIALRSGFMV), 159-189 (FTDLRNALIHFYCVCGKISDARKVFDEMPQS), 191-225 (DAVTFSTLMNGYLQVSKKALALDLFRIMRKSEVVV), 226-260 (NVSTLLSFLSAISDLGDLSGAESAHVLCIKIGLDL), 261-291 (DLHLITALIGMYGKTGGISSARRIFDCAIRK), 292-326 (DVVTWNCMIDQYAKTGLLEECVWLLRQMKYEKMKP), 327-361 (NSSTFVGLLSSCAYSEAAFVGRTVADLLEEERIAL), 362-392 (DAILGTALVDMYAKVGLLEKAVEIFNRMKDK), 393-427 (DVKSWTAMISGYGAHGLAREAVTLFNKMEEENCKV), 430-460 (NEITFLVVLNACSHGGLVMEGIRCFKRMVEA), and 466-496 (KVEHYGCVVDLLGRAGQLEEAYELIRNLPIT). The tract at residues 501–572 (AWRALLAACR…EAGYSAIEIE (72 aa)) is type E motif.

It belongs to the PPR family. PCMP-E subfamily.

It is found in the mitochondrion. This chain is Pentatricopeptide repeat-containing protein At1g26900, mitochondrial (PCMP-E54), found in Arabidopsis thaliana (Mouse-ear cress).